Consider the following 507-residue polypeptide: Probable malate:quinone oxidoreductase 2 (507 aa).

The protein belongs to the MQO family. FAD serves as cofactor.

The catalysed reaction is (S)-malate + a quinone = a quinol + oxaloacetate. It participates in carbohydrate metabolism; tricarboxylic acid cycle; oxaloacetate from (S)-malate (quinone route): step 1/1. The polypeptide is Probable malate:quinone oxidoreductase 2 (Pseudomonas aeruginosa (strain ATCC 15692 / DSM 22644 / CIP 104116 / JCM 14847 / LMG 12228 / 1C / PRS 101 / PAO1)).